Here is a 519-residue protein sequence, read N- to C-terminus: Trichothecene 15-O-acetyltransferase TRI3 (519 aa).

Residue histidine 414 participates in 15-deacetylcalonectrin binding.

Belongs to the trichothecene O-acetyltransferase family.

It functions in the pathway sesquiterpene biosynthesis; trichothecene biosynthesis. 15-O-acetyltransferase; part of the core gene cluster that mediates the biosynthesis of trichothecenes, a very large family of chemically related bicyclic sesquiterpene compounds acting as mycotoxins, including T2-toxin. The biosynthesis of trichothecenes begins with the cyclization of farnesyl diphosphate to trichodiene and is catalyzed by the trichodiene synthase TRI5. Trichodiene undergoes a series of oxygenations catalyzed by the cytochrome P450 monooxygenase TRI4. TRI4 controls the addition of four oxygens at C-2, C-3, C-11, and the C-12, C-13-epoxide to form the intermediate isotrichotriol. Isotrichotriol then undergoes a non-enzymatic isomerization and cyclization to form isotrichodermol. During this process, the oxygen at the C-2 position becomes the pyran ring oxygen and the hydroxyl group at C-11 is lost. More complex type A trichothecenes are built by modifying isotrichodermol through a series of paired hydroxylation and acetylation or acylation steps. Isotrichodermol is converted to isotrichodermin by the acetyltransferase TRI101. TRI101 encodes a C-3 transacetylase that acts as a self-protection or resistance factor during biosynthesis and that the presence of a free C-3 hydroxyl group is a key component of Fusarium trichothecene phytotoxicity. A second hydroxyl group is added to C-15 by the trichothecene C-15 hydroxylase TRI11, producing 15-decalonectrin, which is then acetylated by TRI3, producing calonectrin. A third hydroxyl group is added at C-4 by the cytochrome P450 monooxygenase TRI13, converting calonectrin to 3,15-diacetoxyspirpenol, which is subsequently acetylated by the acetyltransferase TRI7. A fourth hydroxyl group is added to C-8 by the cytochrome P450 monooxygenase TRI1, followed by the addition of an isovaleryl moiety by TRI16. Finally, the acetyl group is removed from the C-3 position by the trichothecene C-3 esterase TRI8 to produce T-2 toxin. The protein is Trichothecene 15-O-acetyltransferase TRI3 of Fusarium sporotrichioides.